A 147-amino-acid chain; its full sequence is UPF0179 protein MTH_609 (147 aa).

Belongs to the UPF0179 family.

The protein is UPF0179 protein MTH_609 of Methanothermobacter thermautotrophicus (strain ATCC 29096 / DSM 1053 / JCM 10044 / NBRC 100330 / Delta H) (Methanobacterium thermoautotrophicum).